A 290-amino-acid chain; its full sequence is Shikimate dehydrogenase (NADP(+)) (290 aa).

Shikimate-binding positions include 21 to 23 and T68; that span reads SLS. K72 functions as the Proton acceptor in the catalytic mechanism. E84 lines the NADP(+) pocket. Residues N93 and D108 each coordinate shikimate. NADP(+) is bound by residues 132–136 and L230; that span reads GYGGA. Residue Y232 participates in shikimate binding. Residue G253 participates in NADP(+) binding.

Belongs to the shikimate dehydrogenase family. As to quaternary structure, homodimer.

The catalysed reaction is shikimate + NADP(+) = 3-dehydroshikimate + NADPH + H(+). Its pathway is metabolic intermediate biosynthesis; chorismate biosynthesis; chorismate from D-erythrose 4-phosphate and phosphoenolpyruvate: step 4/7. Functionally, involved in the biosynthesis of the chorismate, which leads to the biosynthesis of aromatic amino acids. Catalyzes the reversible NADPH linked reduction of 3-dehydroshikimate (DHSA) to yield shikimate (SA). The polypeptide is Shikimate dehydrogenase (NADP(+)) (Synechocystis sp. (strain ATCC 27184 / PCC 6803 / Kazusa)).